The primary structure comprises 734 residues: Photosystem I P700 chlorophyll a apoprotein A2 (734 aa).

A run of 8 helical transmembrane segments spans residues 46 to 69 (IFAS…FHVA), 135 to 158 (LYTG…LHLQ), 175 to 199 (LNHH…HVAI), 273 to 291 (IAHH…GHMY), 330 to 353 (IHFQ…QHMY), 369 to 395 (AALY…IFFI), 417 to 439 (AIKS…LYVH), and 517 to 535 (FLVH…LILV). [4Fe-4S] cluster-binding residues include cysteine 559 and cysteine 568. 2 helical membrane passes run 575-596 (AFYL…YWHW) and 643-665 (LSVW…MFLI). Residues histidine 654, methionine 662, and tyrosine 670 each contribute to the chlorophyll a site. Position 671 (tryptophan 671) interacts with phylloquinone. The helical transmembrane segment at 707 to 727 (LVGLAHFSVGYIFTYAAFLIA) threads the bilayer.

The protein belongs to the PsaA/PsaB family. In terms of assembly, the PsaA/B heterodimer binds the P700 chlorophyll special pair and subsequent electron acceptors. PSI consists of a core antenna complex that captures photons, and an electron transfer chain that converts photonic excitation into a charge separation. The eukaryotic PSI reaction center is composed of at least 11 subunits. P700 is a chlorophyll a/chlorophyll a' dimer, A0 is one or more chlorophyll a, A1 is one or both phylloquinones and FX is a shared 4Fe-4S iron-sulfur center. is required as a cofactor.

It localises to the plastid. Its subcellular location is the chloroplast thylakoid membrane. The catalysed reaction is reduced [plastocyanin] + hnu + oxidized [2Fe-2S]-[ferredoxin] = oxidized [plastocyanin] + reduced [2Fe-2S]-[ferredoxin]. In terms of biological role, psaA and PsaB bind P700, the primary electron donor of photosystem I (PSI), as well as the electron acceptors A0, A1 and FX. PSI is a plastocyanin-ferredoxin oxidoreductase, converting photonic excitation into a charge separation, which transfers an electron from the donor P700 chlorophyll pair to the spectroscopically characterized acceptors A0, A1, FX, FA and FB in turn. Oxidized P700 is reduced on the lumenal side of the thylakoid membrane by plastocyanin. This Amborella trichopoda protein is Photosystem I P700 chlorophyll a apoprotein A2.